The chain runs to 65 residues: Small ribosomal subunit protein bS21 (65 aa).

The tract at residues 43-65 is disordered; sequence VDDRLKRARSKRRAQRANEESNA. A compositionally biased stretch (basic residues) spans 48-57; it reads KRARSKRRAQ.

The protein belongs to the bacterial ribosomal protein bS21 family.

This is Small ribosomal subunit protein bS21 from Chloroherpeton thalassium (strain ATCC 35110 / GB-78).